The following is a 376-amino-acid chain: Alanine racemase (376 aa).

Lys40 serves as the catalytic Proton acceptor; specific for D-alanine. The residue at position 40 (Lys40) is an N6-(pyridoxal phosphate)lysine. Residue Arg138 coordinates substrate. Tyr270 acts as the Proton acceptor; specific for L-alanine in catalysis. Met317 serves as a coordination point for substrate.

This sequence belongs to the alanine racemase family. Pyridoxal 5'-phosphate is required as a cofactor.

The enzyme catalyses L-alanine = D-alanine. Its pathway is amino-acid biosynthesis; D-alanine biosynthesis; D-alanine from L-alanine: step 1/1. Catalyzes the interconversion of L-alanine and D-alanine. May also act on other amino acids. This chain is Alanine racemase (alr), found in Lactobacillus gasseri (strain ATCC 33323 / DSM 20243 / BCRC 14619 / CIP 102991 / JCM 1131 / KCTC 3163 / NCIMB 11718 / NCTC 13722 / AM63).